The primary structure comprises 113 residues: Hydrogenase maturation factor HybF (113 aa).

Ni(2+) is bound by residues His-2 and Glu-3. Zn(2+) is bound by residues Cys-73, Cys-76, Cys-89, and Cys-92.

The protein belongs to the HypA/HybF family. HybF subfamily.

Functionally, involved in the maturation of [NiFe] hydrogenases. Required for nickel insertion into the metal center of the hydrogenase. This Escherichia coli O6:H1 (strain CFT073 / ATCC 700928 / UPEC) protein is Hydrogenase maturation factor HybF.